The sequence spans 306 residues: MQALLQEILDHVHPLLAQGQVAQYIPALAQVDPNQLGIAVQSLDGQLHCAGDAHTPFSIQSISKVFSLVQAINHSGEDIWSRLGYEPSGQAFNSLVQLEVEKGRPRNPFINAGALVICDINQSRYATPTLSMRDFVRRLSANPRIVSDAVVAESEYEHRARNAAMAYLMQAFGNFHNDVDAVLRSYFHHCALSMSCVDVARGFAFLANGGLCPHSGEQVLSRRQAQQVNAIMATSGLYDEAGNFAYRVGLPGKSGVGGGIVAVVPGRYSICVWSPALNASGNSLAGLRALELLSERMTGSVFSAIS.

7 residues coordinate substrate: S61, N111, E155, N162, Y186, Y238, and V256.

This sequence belongs to the glutaminase family. Homotetramer.

The catalysed reaction is L-glutamine + H2O = L-glutamate + NH4(+). The protein is Glutaminase of Pseudomonas entomophila (strain L48).